The primary structure comprises 248 residues: uncharacterized protein (248 aa).

An NADP(+)-binding site is contributed by 8–32 (IVTGAAQGIGQAYAQALAREGASVV). Serine 143 provides a ligand contact to substrate. The active-site Proton acceptor is the tyrosine 153.

It belongs to the short-chain dehydrogenases/reductases (SDR) family.

This is an uncharacterized protein from Mycobacterium tuberculosis (strain CDC 1551 / Oshkosh).